The chain runs to 159 residues: Protransforming growth factor alpha (159 aa).

An N-terminal signal peptide occupies residues 1 to 23 (MVPAAGQLALLALGILVAVCQAL). Positions 24–38 (ENSTSPLSDSPVAAA) are cleaved as a propeptide — removed in mature form. The Extracellular segment spans residues 24–97 (ENSTSPLSDS…AVVAASQKKQ (74 aa)). N25 carries N-linked (GlcNAc...) asparagine glycosylation. The region spanning 42 to 82 (HFNKCPDSHTQYCFHGTCRFLVQEEKPACVCHSGYVGVRCE) is the EGF-like domain. Cystine bridges form between C46-C59, C54-C70, and C72-C81. Positions 89 to 159 (VVAASQKKQA…TACCHSETVV (71 aa)) are cleaved as a propeptide — removed in mature form. A helical membrane pass occupies residues 98 to 123 (AITALVVVSIVALAVLIITCVLIHCC). Topologically, residues 124-159 (QVRKHCEWCRALVCRHEKPSALLKGRTACCHSETVV) are cytoplasmic. 2 S-palmitoyl cysteine lipidation sites follow: C152 and C153.

In terms of assembly, interacts with the PDZ domains of MAGI3, SDCBP and SNTA1. The interaction with SDCBP, is required for the targeting to the cell surface. In the endoplasmic reticulum, in its immature form (i.e. with a prosegment and lacking full N-glycosylation), interacts with CNIH. In the Golgi apparatus, may form a complex with CNIH and GORASP2. Interacts (via cytoplasmic C-terminal domain) with NKD2.

The protein localises to the secreted. It is found in the extracellular space. Its subcellular location is the cell membrane. TGF alpha is a mitogenic polypeptide that is able to bind to the EGF receptor/EGFR and to act synergistically with TGF beta to promote anchorage-independent cell proliferation in soft agar. The protein is Protransforming growth factor alpha (Tgfa) of Rattus norvegicus (Rat).